The chain runs to 166 residues: Thiol peroxidase (166 aa).

Residues 18-166 (LKVGDKAPDV…NYEALLKVLK (149 aa)) form the Thioredoxin domain. Catalysis depends on C60, which acts as the Cysteine sulfenic acid (-SOH) intermediate. An intrachain disulfide couples C60 to C94.

It belongs to the peroxiredoxin family. Tpx subfamily. As to quaternary structure, homodimer.

It carries out the reaction a hydroperoxide + [thioredoxin]-dithiol = an alcohol + [thioredoxin]-disulfide + H2O. In terms of biological role, thiol-specific peroxidase that catalyzes the reduction of hydrogen peroxide and organic hydroperoxides to water and alcohols, respectively. Plays a role in cell protection against oxidative stress by detoxifying peroxides. The sequence is that of Thiol peroxidase from Helicobacter pylori (strain J99 / ATCC 700824) (Campylobacter pylori J99).